Here is a 92-residue protein sequence, read N- to C-terminus: uncharacterized protein (92 aa).

This is an uncharacterized protein from Escherichia coli O157:H7.